A 750-amino-acid chain; its full sequence is MTIRSPEPEVKIVVEKDPVKTSFEKWAKPGHFSRTLAKGPSTTTWIWNLHADAHDFDSHTNDLEEISRKVFSAHFGQLAIIFIWLSGMYFHGARFSNYEAWLSDPTHIKPSAQVVWPIVGQEILNGDVGGGFQGIQITSGFFQLWRASGITSELQLYSTAIGGLVFAALMLFAGWFHYHKAAPKLAWFQDVESMLNHHLAGLLGLGSLSWAGHQVHVSLPINQLLDAGVDPKEIPLPHEFILNRDLLAELYPSFAKGLTPFFTLNWSEYSDFLTFRGGLNPVTGGLWLTDTAHHHLAIAVLFLVAGHMYRTNWGIGHSFKEILEAHKGPFTGEGHKGLYEILTTSWHAQLALNLAMLGSLTIIVAHHMYAMPPYPYLATDYGTQLSLFTHHMWIGGFLIVGAAAHAAIFMVRDYDPTTQYNNLLDRVLRHRDAIISHLNWVCIFLGFHSFGLYIHNDTMSALGRPQDMFSDTAIQLQPVFAQWIQNTHALAPNFTAPNALASTSLTWGGGDVIAVGSKVALLPIPLGTADFLVHHIHAFTIHVTVLILLKGVLFARSSRLIPDKANLGFRFPCDGPGRGGTCQVSAWDHVFLGLFWMYNSISVVIFHFSWKMQSDVWGTISEQGVVTHITGGNFAQSAITINGWLRDFLWAQASQVIQSYGSSLSAYGLLFLGAHFVWAFSLMFLFSGRGYWQELIESIVWAHNKLKVAPAIQPRALSITQGRAVGVAHYLLGGIATTWAFFLARIIAVG.

8 consecutive transmembrane segments (helical) span residues 70 to 93 (VFSA…FHGA), 156 to 179 (LYST…FHYH), 195 to 219 (LNHH…HVSL), 291 to 309 (TAHH…GHMY), 346 to 369 (WHAQ…HHMY), 385 to 411 (LSLF…IFMV), 433 to 455 (AIIS…LYIH), and 531 to 549 (FLVH…LILL). Residues Cys573 and Cys582 each contribute to the [4Fe-4S] cluster site. Helical transmembrane passes span 589-610 (HVFL…HFSW) and 664-686 (LSAY…MFLF). His675 lines the chlorophyll a' pocket. Met683 and Tyr691 together coordinate chlorophyll a. Trp692 serves as a coordination point for phylloquinone. Residues 724 to 744 (AVGVAHYLLGGIATTWAFFLA) traverse the membrane as a helical segment.

Belongs to the PsaA/PsaB family. The PsaA/B heterodimer binds the P700 chlorophyll special pair and subsequent electron acceptors. PSI consists of a core antenna complex that captures photons, and an electron transfer chain that converts photonic excitation into a charge separation. The eukaryotic PSI reaction center is composed of at least 11 subunits. P700 is a chlorophyll a/chlorophyll a' dimer, A0 is one or more chlorophyll a, A1 is one or both phylloquinones and FX is a shared 4Fe-4S iron-sulfur center. serves as cofactor.

The protein localises to the plastid. It is found in the chloroplast thylakoid membrane. It catalyses the reaction reduced [plastocyanin] + hnu + oxidized [2Fe-2S]-[ferredoxin] = oxidized [plastocyanin] + reduced [2Fe-2S]-[ferredoxin]. Its function is as follows. PsaA and PsaB bind P700, the primary electron donor of photosystem I (PSI), as well as the electron acceptors A0, A1 and FX. PSI is a plastocyanin-ferredoxin oxidoreductase, converting photonic excitation into a charge separation, which transfers an electron from the donor P700 chlorophyll pair to the spectroscopically characterized acceptors A0, A1, FX, FA and FB in turn. Oxidized P700 is reduced on the lumenal side of the thylakoid membrane by plastocyanin. This Marchantia polymorpha (Common liverwort) protein is Photosystem I P700 chlorophyll a apoprotein A1.